Reading from the N-terminus, the 428-residue chain is Aspartic protease 10 (428 aa).

An N-terminal signal peptide occupies residues 1–16; that stretch reads MKTFIALLALLTVVSA. Residues 72–425 form the Peptidase A1 domain; it reads YMVQISLGSP…DMKSGRLGLA (354 aa). Residue aspartate 90 is part of the active site. N-linked (GlcNAc...) asparagine glycosylation is found at asparagine 155 and asparagine 191. The active site involves aspartate 318. Cysteine 353 and cysteine 385 are oxidised to a cystine.

The protein belongs to the peptidase A1 family. In terms of processing, proteolytically cleaved. In terms of tissue distribution, synthesized in the intestine. When secreted in low heme conditions, localizes to neurons near the anterior and posterior regions of the body and in coelomocytes.

The protein localises to the secreted. In terms of biological role, aspartic protease which plays a role in heme homeostasis and mediates inter-organ signaling between the intestine and extra-intestinal tissues when cellular heme levels are low. This chain is Aspartic protease 10, found in Caenorhabditis elegans.